The sequence spans 424 residues: MLDIKRIRTDFEAVAEKLATRGVDAAVLNEMKEIDAKRRNILVKVETLKAERNTVSAEIAQAKRNKENTDDKIAAMQNLSAEVKALDAELAEIDAKLTEFTTTLPNIPADSVPVGADEDDNVEVRRWGTPREFDFEPKAHWDLGEDLGILDWERGGKVTGARFLFYKGLGARLERAIYNFMLDEHGKEGYTEVITPYIVNHDSMFGTGQYPKFKEDTFELSDTNFVLIPTAEVPLTNYYRDEILDGKDLPIYFTAMSPSFRSEAGSAGRDTRGLIRLHQFHKVEMVKFAKPEESYEELEKMTANAENILQKLNLPYRVVALSTGDMGFSAAKTYDLEVWIPAQNNYREISSCSNTEDFQARRAQIRYRDEADGKVKLLHTLNGSGLAVGRTVAAILENYQNEDGSVTIPEALRPYMGGAEVIKP.

230–232 (TAE) lines the L-serine pocket. 261-263 (RSE) provides a ligand contact to ATP. Residue Glu284 coordinates L-serine. Residue 348–351 (EISS) participates in ATP binding. Ser384 is an L-serine binding site.

This sequence belongs to the class-II aminoacyl-tRNA synthetase family. Type-1 seryl-tRNA synthetase subfamily. In terms of assembly, homodimer. The tRNA molecule binds across the dimer.

The protein localises to the cytoplasm. It catalyses the reaction tRNA(Ser) + L-serine + ATP = L-seryl-tRNA(Ser) + AMP + diphosphate + H(+). The enzyme catalyses tRNA(Sec) + L-serine + ATP = L-seryl-tRNA(Sec) + AMP + diphosphate + H(+). Its pathway is aminoacyl-tRNA biosynthesis; selenocysteinyl-tRNA(Sec) biosynthesis; L-seryl-tRNA(Sec) from L-serine and tRNA(Sec): step 1/1. Catalyzes the attachment of serine to tRNA(Ser). Is also able to aminoacylate tRNA(Sec) with serine, to form the misacylated tRNA L-seryl-tRNA(Sec), which will be further converted into selenocysteinyl-tRNA(Sec). This is Serine--tRNA ligase from Streptococcus pneumoniae serotype 4 (strain ATCC BAA-334 / TIGR4).